Here is a 375-residue protein sequence, read N- to C-terminus: Actin-binding Rho-activating protein (375 aa).

The tract at residues 37 to 101 (ANENSTRQAQ…ATEVSHIKRK (65 aa)) is disordered. The span at 80–101 (PDGDREGRGSEEATEVSHIKRK) shows a compositional bias: basic and acidic residues. Ser150 and Ser182 each carry phosphoserine. The disordered stretch occupies residues 175-197 (EPKWKSDSIDTEDSGYGGDMEER). Actin-binding regions lie at residues 193 to 293 (DMEE…AERA) and 294 to 375 (KRAE…TLLE). Interaction with actin regions lie at residues 234–279 (SQVD…GDEG) and 346–375 (MRAR…TLLE).

In terms of assembly, binds F-actin and ABLIM1, ABLIM2 and ABLIM3. Interaction with ABLIM2 and ABLIM3 enhances activity. As to expression, predominantly expressed in heart and skeletal muscle, and expressed at lower levels in adrenal gland, brain, kidney, liver, and testis.

It localises to the cytoplasm. The protein resides in the myofibril. Its subcellular location is the sarcomere. The protein localises to the cytoskeleton. Its function is as follows. Acts as an activator of serum response factor (SRF)-dependent transcription possibly by inducing nuclear translocation of MKL1 or MKL2 and through a mechanism requiring Rho-actin signaling. This is Actin-binding Rho-activating protein from Rattus norvegicus (Rat).